The primary structure comprises 177 residues: Large ribosomal subunit protein uL6 (177 aa).

Belongs to the universal ribosomal protein uL6 family. As to quaternary structure, part of the 50S ribosomal subunit.

Functionally, this protein binds to the 23S rRNA, and is important in its secondary structure. It is located near the subunit interface in the base of the L7/L12 stalk, and near the tRNA binding site of the peptidyltransferase center. The protein is Large ribosomal subunit protein uL6 of Cronobacter sakazakii (strain ATCC BAA-894) (Enterobacter sakazakii).